Consider the following 141-residue polypeptide: Hemoglobin subunit alpha-A (141 aa).

The Globin domain maps to 1-141 (VLSSGDKANV…VSTVLTSKYR (141 aa)). H58 lines the O2 pocket. Position 87 (H87) interacts with heme b.

This sequence belongs to the globin family. Heterotetramer of two alpha chains and two beta chains. Red blood cells.

Functionally, involved in oxygen transport from the lung to the various peripheral tissues. This is Hemoglobin subunit alpha-A (HBAA) from Caretta caretta (Loggerhead sea turtle).